Reading from the N-terminus, the 221-residue chain is uncharacterized protein (221 aa).

The segment covering 1-16 has biased composition (basic and acidic residues); the sequence is MESSRWDKDPPGERRP. The disordered stretch occupies residues 1 to 64; that stretch reads MESSRWDKDP…SHTPQTNTRR (64 aa).

This is an uncharacterized protein from Homo sapiens (Human).